Reading from the N-terminus, the 90-residue chain is Probable Fe(2+)-trafficking protein (90 aa).

It belongs to the Fe(2+)-trafficking protein family.

Functionally, could be a mediator in iron transactions between iron acquisition and iron-requiring processes, such as synthesis and/or repair of Fe-S clusters in biosynthetic enzymes. This chain is Probable Fe(2+)-trafficking protein, found in Hydrogenovibrio crunogenus (strain DSM 25203 / XCL-2) (Thiomicrospira crunogena).